A 419-amino-acid chain; its full sequence is Acyl-coenzyme A thioesterase 6 (419 aa).

Residues Ser-232, Asp-324, and His-358 each act as charge relay system in the active site. A Peroxisome targeting signal motif is present at residues 417-419; it reads SKL.

It belongs to the C/M/P thioester hydrolase family. As to expression, highly expressed in white adipose tissue. Detected at lower levels in kidney, liver, brown adipose tissue and brain.

The protein localises to the peroxisome. The catalysed reaction is pristanoyl-CoA + H2O = 2,6,10,14-tetramethylpentadecanoate + CoA + H(+). It carries out the reaction phytanoyl-CoA + H2O = 3,7,11,15-tetramethylhexadecanoate + CoA + H(+). It functions in the pathway lipid metabolism; fatty acid metabolism. Its function is as follows. Catalyzes the hydrolysis of acyl-CoAs into free fatty acids and coenzyme A (CoASH), regulating their respective intracellular levels. Catalyzes the hydrolysis of phytanoyl-CoA and pristanoyl-CoA, two methyl-branched fatty acids derived from phytol, that enter the body via the diet. The sequence is that of Acyl-coenzyme A thioesterase 6 from Mus musculus (Mouse).